Consider the following 91-residue polypeptide: Putative membrane protein insertion efficiency factor (91 aa).

A disordered region spans residues 66-91; that stretch reads GGVDPVPSCGCHSDKETTPKEKSDNA. The segment covering 77-91 has biased composition (basic and acidic residues); the sequence is HSDKETTPKEKSDNA.

This sequence belongs to the UPF0161 family.

The protein resides in the cell inner membrane. Could be involved in insertion of integral membrane proteins into the membrane. The protein is Putative membrane protein insertion efficiency factor of Hydrogenovibrio crunogenus (strain DSM 25203 / XCL-2) (Thiomicrospira crunogena).